An 882-amino-acid chain; its full sequence is Valine--tRNA ligase (882 aa).

Residues 45-55 (PNVTGKLHLGH) carry the 'HIGH' region motif. A 'KMSKS' region motif is present at residues 519-523 (KMSKS). An ATP-binding site is contributed by lysine 522. Residues 808 to 882 (LADLLNVEEE…RIAEMHKLVK (75 aa)) adopt a coiled-coil conformation.

This sequence belongs to the class-I aminoacyl-tRNA synthetase family. ValS type 1 subfamily. In terms of assembly, monomer.

It localises to the cytoplasm. The catalysed reaction is tRNA(Val) + L-valine + ATP = L-valyl-tRNA(Val) + AMP + diphosphate. Its function is as follows. Catalyzes the attachment of valine to tRNA(Val). As ValRS can inadvertently accommodate and process structurally similar amino acids such as threonine, to avoid such errors, it has a 'posttransfer' editing activity that hydrolyzes mischarged Thr-tRNA(Val) in a tRNA-dependent manner. This is Valine--tRNA ligase from Streptococcus pyogenes serotype M18 (strain MGAS8232).